We begin with the raw amino-acid sequence, 99 residues long: Small ribosomal subunit protein bS18 (99 aa).

Residues 1-25 are compositionally biased toward basic and acidic residues; that stretch reads MAEDHPSVDLDTHLSSPRESEESAP. The segment at 1–28 is disordered; sequence MAEDHPSVDLDTHLSSPRESEESAPKKN.

It belongs to the bacterial ribosomal protein bS18 family. In terms of assembly, part of the 30S ribosomal subunit. Forms a tight heterodimer with protein bS6.

Binds as a heterodimer with protein bS6 to the central domain of the 16S rRNA, where it helps stabilize the platform of the 30S subunit. The polypeptide is Small ribosomal subunit protein bS18 (Treponema pallidum (strain Nichols)).